A 592-amino-acid chain; its full sequence is Glycosyltransferase 25 family member (592 aa).

The first 13 residues, 1–13 (MLALLLTTTIVSG), serve as a signal peptide directing secretion. Residues Asn249 and Asn510 are each glycosylated (N-linked (GlcNAc...) asparagine). Basic and acidic residues-rich tracts occupy residues 552–563 (RIQEPKKGDKEQ) and 579–592 (GEHDLETKNRRSEL). Residues 552–592 (RIQEPKKGDKEQLPNAPALLSESGIGQGEHDLETKNRRSEL) form a disordered region. The short motif at 589–592 (RSEL) is the Prevents secretion from ER element.

Belongs to the glycosyltransferase 25 family.

The protein localises to the endoplasmic reticulum lumen. In Anopheles gambiae (African malaria mosquito), this protein is Glycosyltransferase 25 family member.